A 271-amino-acid polypeptide reads, in one-letter code: uncharacterized protein (271 aa).

This is an uncharacterized protein from Escherichia coli (strain K12).